The chain runs to 384 residues: Glucans biosynthesis protein C (384 aa).

A run of 10 helical transmembrane segments spans residues 17 to 37 (AWLM…THSW), 54 to 74 (FIHA…SYML), 91 to 111 (VGIP…ILLQ), 140 to 160 (LWFL…FTWF), 173 to 193 (AISL…YAAI), 212 to 232 (FIVM…LAFI), 240 to 260 (FTTP…AYLL), 274 to 294 (TESV…FSLG), 311 to 331 (ASLF…AYIT), and 338 to 358 (LIGF…LYEI).

The protein belongs to the acyltransferase 3 family. OpgC subfamily.

Its subcellular location is the cell membrane. Its pathway is glycan metabolism; osmoregulated periplasmic glucan (OPG) biosynthesis. Functionally, necessary for the succinyl substitution of periplasmic glucans. Could catalyze the transfer of succinyl residues from the cytoplasmic side of the membrane to the nascent glucan backbones on the periplasmic side of the membrane. The chain is Glucans biosynthesis protein C from Salmonella gallinarum (strain 287/91 / NCTC 13346).